The chain runs to 145 residues: Ribonuclease VapC48 (145 aa).

Asp-6 and Asp-109 together coordinate Mg(2+). The PINc domain maps to 15-141 (HRASPFHDKA…RKFEGIRIRD (127 aa)).

This sequence belongs to the PINc/VapC protein family. Requires Mg(2+) as cofactor.

In terms of biological role, toxic component of a type II toxin-antitoxin (TA) system. An RNase. Its cognate antitoxin is VapB48. The polypeptide is Ribonuclease VapC48 (Mycobacterium tuberculosis (strain CDC 1551 / Oshkosh)).